The chain runs to 173 residues: Crossover junction endodeoxyribonuclease RuvC (173 aa).

Residues D8, E67, and D139 contribute to the active site. The Mg(2+) site is built by D8, E67, and D139.

This sequence belongs to the RuvC family. In terms of assembly, homodimer which binds Holliday junction (HJ) DNA. The HJ becomes 2-fold symmetrical on binding to RuvC with unstacked arms; it has a different conformation from HJ DNA in complex with RuvA. In the full resolvosome a probable DNA-RuvA(4)-RuvB(12)-RuvC(2) complex forms which resolves the HJ. The cofactor is Mg(2+).

Its subcellular location is the cytoplasm. The enzyme catalyses Endonucleolytic cleavage at a junction such as a reciprocal single-stranded crossover between two homologous DNA duplexes (Holliday junction).. Functionally, the RuvA-RuvB-RuvC complex processes Holliday junction (HJ) DNA during genetic recombination and DNA repair. Endonuclease that resolves HJ intermediates. Cleaves cruciform DNA by making single-stranded nicks across the HJ at symmetrical positions within the homologous arms, yielding a 5'-phosphate and a 3'-hydroxyl group; requires a central core of homology in the junction. The consensus cleavage sequence is 5'-(A/T)TT(C/G)-3'. Cleavage occurs on the 3'-side of the TT dinucleotide at the point of strand exchange. HJ branch migration catalyzed by RuvA-RuvB allows RuvC to scan DNA until it finds its consensus sequence, where it cleaves and resolves the cruciform DNA. This is Crossover junction endodeoxyribonuclease RuvC from Shigella flexneri serotype 5b (strain 8401).